Reading from the N-terminus, the 323-residue chain is NADH-ubiquinone oxidoreductase chain 1 (323 aa).

Helical transmembrane passes span 10-30 (LLYIIIEGGLKSLIVIIGLLI), 52-72 (PNVVGFVGLLQPLADGLKLVL), 84-104 (IIYAIAPILTFTISIVLWSVI), 119-139 (VIFILAISSIGVYGIILAGWA), 157-177 (VSYEVALGLIILSIITYAGTV), 189-209 (VWFIVPLLPGFLLAFISALAE), 245-265 (YANIILMSVLLSVFFLGGIVS), 268-288 (ISGAMKGVGMLCSFIWVRATL), and 302-322 (KSLLPFALLIYIGVISMVLII).

This sequence belongs to the complex I subunit 1 family.

Its subcellular location is the mitochondrion inner membrane. The enzyme catalyses a ubiquinone + NADH + 5 H(+)(in) = a ubiquinol + NAD(+) + 4 H(+)(out). Its function is as follows. Core subunit of the mitochondrial membrane respiratory chain NADH dehydrogenase (Complex I) that is believed to belong to the minimal assembly required for catalysis. Complex I functions in the transfer of electrons from NADH to the respiratory chain. The immediate electron acceptor for the enzyme is believed to be ubiquinone. In Dictyostelium citrinum (Slime mold), this protein is NADH-ubiquinone oxidoreductase chain 1 (nad1).